We begin with the raw amino-acid sequence, 132 residues long: Small ribosomal subunit protein uS8 (132 aa).

Belongs to the universal ribosomal protein uS8 family. In terms of assembly, part of the 30S ribosomal subunit. Contacts proteins S5 and S12.

One of the primary rRNA binding proteins, it binds directly to 16S rRNA central domain where it helps coordinate assembly of the platform of the 30S subunit. The chain is Small ribosomal subunit protein uS8 from Heliobacterium modesticaldum (strain ATCC 51547 / Ice1).